The primary structure comprises 1347 residues: G-protein coupled receptor-associated sorting protein 1 (1347 aa).

Disordered stretches follow at residues 1 to 75 (MTRA…AYAK), 145 to 174 (ESIP…SWYR), and 188 to 281 (DFKW…NSRS). The span at 21-33 (ENANAAEVEPEAP) shows a compositional bias: low complexity. Residues 211-226 (FRPRKSMKANNRFRHM) show a composition bias toward basic residues. A compositionally biased stretch (basic and acidic residues) spans 263–278 (PKDKTKVWSKPKEEPN). S295 is subject to Phosphoserine. 3 disordered regions span residues 310–344 (GEEA…AMSG), 364–396 (FSKS…QEAR), and 460–485 (QVSS…SKSM). The span at 316 to 325 (RSKPRARKGV) shows a compositional bias: basic residues. The segment covering 370-396 (KKEPRTRAVPKEEVKTKARASTKQEAR) has biased composition (basic and acidic residues). The segment covering 461–484 (VSSFCLGSGKKSSMESGPKATSKS) has biased composition (polar residues). Residues S619 and S626 each carry the phosphoserine modification. Position 860 is a phosphothreonine (T860). S862 carries the phosphoserine modification.

It belongs to the GPRASP family. In terms of assembly, interacts with cytoplasmic tails of a variety of G-protein coupled receptors such as delta opioid receptor/OPRD1, beta-2 adrenergic receptor/ADRB2 and D4 dopamine receptor/DRD4 as well as D2 dopamine receptor/DRD2. Interacts with PER1. Interacts with BECN2; the interaction is direct. In terms of tissue distribution, expressed in the brain, with higher expression in the hippocampus, hypothalamus and olfactory bulb.

It is found in the cytoplasm. In terms of biological role, modulates lysosomal sorting and functional down-regulation of a variety of G-protein coupled receptors. Targets receptors for degradation in lysosomes via its interaction with BECN2. In Mus musculus (Mouse), this protein is G-protein coupled receptor-associated sorting protein 1 (Gprasp1).